We begin with the raw amino-acid sequence, 370 residues long: Histidinol-phosphate aminotransferase (370 aa).

Lys220 carries the post-translational modification N6-(pyridoxal phosphate)lysine.

It belongs to the class-II pyridoxal-phosphate-dependent aminotransferase family. Histidinol-phosphate aminotransferase subfamily. Homodimer. Pyridoxal 5'-phosphate serves as cofactor.

The enzyme catalyses L-histidinol phosphate + 2-oxoglutarate = 3-(imidazol-4-yl)-2-oxopropyl phosphate + L-glutamate. Its pathway is amino-acid biosynthesis; L-histidine biosynthesis; L-histidine from 5-phospho-alpha-D-ribose 1-diphosphate: step 7/9. The protein is Histidinol-phosphate aminotransferase of Granulibacter bethesdensis (strain ATCC BAA-1260 / CGDNIH1).